Consider the following 333-residue polypeptide: Fructose-1,6-bisphosphatase class 1 1 (333 aa).

Positions 81, 100, 102, and 103 each coordinate Mg(2+). Substrate contacts are provided by residues 103–106 (DGSS) and N191. Residue E263 coordinates Mg(2+).

Belongs to the FBPase class 1 family. As to quaternary structure, homotetramer. It depends on Mg(2+) as a cofactor.

It localises to the cytoplasm. The enzyme catalyses beta-D-fructose 1,6-bisphosphate + H2O = beta-D-fructose 6-phosphate + phosphate. The protein operates within carbohydrate biosynthesis; Calvin cycle. The sequence is that of Fructose-1,6-bisphosphatase class 1 1 from Cereibacter sphaeroides (strain ATCC 17023 / DSM 158 / JCM 6121 / CCUG 31486 / LMG 2827 / NBRC 12203 / NCIMB 8253 / ATH 2.4.1.) (Rhodobacter sphaeroides).